Reading from the N-terminus, the 857-residue chain is Putative disease resistance protein At1g50180 (857 aa).

Residues 27–60 (IGDQVKQLQDELKRLNCFLKDADEKQHESERVRN) adopt a coiled-coil conformation. The NB-ARC domain maps to 148–461 (SLREQRQSFP…AEGMVMPVKH (314 aa)). Position 192–199 (192–199 (GMGGLGKT)) interacts with ATP. 4 LRR repeats span residues 653-678 (MTSLRRLSINLSSQNTDFVVVSSLSK), 680-703 (LKRLRGLTINVPCEPMLPPVDVTQ), 754-780 (LPNLKILQLFEGSFVGSKLCCSKNLEN), and 791-816 (MMRLVTVELKCCNKLKSVPEGTRFLK).

It belongs to the disease resistance NB-LRR family.

In terms of biological role, potential disease resistance protein. This Arabidopsis thaliana (Mouse-ear cress) protein is Putative disease resistance protein At1g50180.